Here is a 208-residue protein sequence, read N- to C-terminus: Ribosome maturation factor RimP (208 aa).

It belongs to the RimP family.

The protein resides in the cytoplasm. Its function is as follows. Required for maturation of 30S ribosomal subunits. The polypeptide is Ribosome maturation factor RimP (Bartonella tribocorum (strain CIP 105476 / IBS 506)).